The following is an 804-amino-acid chain: Leucine--tRNA ligase (804 aa).

Positions 40–51 (PYPSGAGLHVGH) match the 'HIGH' region motif. The short motif at 576–580 (KMSKS) is the 'KMSKS' region element. K579 contacts ATP.

This sequence belongs to the class-I aminoacyl-tRNA synthetase family.

It localises to the cytoplasm. The catalysed reaction is tRNA(Leu) + L-leucine + ATP = L-leucyl-tRNA(Leu) + AMP + diphosphate. This chain is Leucine--tRNA ligase, found in Staphylococcus aureus (strain Mu3 / ATCC 700698).